Here is a 372-residue protein sequence, read N- to C-terminus: MSLILTINPGSTSTKIAVFAAEEELFERTVEHPHDAFSGLAGVYGQLEARRHAVQTMLSRAGYADARFDIVVGRGGLLAPMHGGAWRVNQTMLDILESAAHGEHPCNLGAPLALAFARSHGAHRNVQAIIVDPVVTDELDPVARIGGLPELPRRSVFHALSQRAAARRAAAQLGIRYEDGRFLVGHFGGGISVGAHRHGRVVDVNNALEGEGPFSPERTGGLPVMPALELVRRGVYSFERMRSIVQREGGMWAHLGTNDLREVQRRMDAGDTAAAQIFDALAYNSAKALCALLPALTGAGQDVPSAPPVDAVVLTGGMARSGRFMQAVSDRLRYLGPVIVLPRLEEMQALAMGGLRVLRGEETPAEYGGGMS.

Belongs to the acetokinase family.

Its subcellular location is the cytoplasm. The catalysed reaction is butanoate + ATP = butanoyl phosphate + ADP. This is Probable butyrate kinase from Oleidesulfovibrio alaskensis (strain ATCC BAA-1058 / DSM 17464 / G20) (Desulfovibrio alaskensis).